The sequence spans 139 residues: Large ribosomal subunit protein uL16 (139 aa).

This sequence belongs to the universal ribosomal protein uL16 family. As to quaternary structure, part of the 50S ribosomal subunit.

Functionally, binds 23S rRNA and is also seen to make contacts with the A and possibly P site tRNAs. This chain is Large ribosomal subunit protein uL16, found in Treponema denticola (strain ATCC 35405 / DSM 14222 / CIP 103919 / JCM 8153 / KCTC 15104).